A 421-amino-acid polypeptide reads, in one-letter code: Enolase (421 aa).

Gln165 contributes to the (2R)-2-phosphoglycerate binding site. Catalysis depends on Glu207, which acts as the Proton donor. Positions 244, 285, and 312 each coordinate Mg(2+). (2R)-2-phosphoglycerate-binding residues include Lys337, Arg366, Ser367, and Lys388. The active-site Proton acceptor is the Lys337.

It belongs to the enolase family. Mg(2+) is required as a cofactor.

The protein resides in the cytoplasm. It is found in the secreted. The protein localises to the cell surface. It carries out the reaction (2R)-2-phosphoglycerate = phosphoenolpyruvate + H2O. It participates in carbohydrate degradation; glycolysis; pyruvate from D-glyceraldehyde 3-phosphate: step 4/5. Its function is as follows. Catalyzes the reversible conversion of 2-phosphoglycerate (2-PG) into phosphoenolpyruvate (PEP). It is essential for the degradation of carbohydrates via glycolysis. This Ehrlichia ruminantium (strain Welgevonden) protein is Enolase.